A 568-amino-acid chain; its full sequence is MDSKTVGILGGGQLGRMIVEAAHRLNIKTVILDAAKSPAKQINALDDHVDGSFTNYDSIVKLAEKADVLTVEIEHVDVDALIKVQEKFPKVEIYPLPETIRLIQDKYLQKNHLIKHDVAVTESVAVETNTVDDLLHIGEKFGYPYMLKSRTLAYDGRGNFVVKDKSYCEKALEFLKDRPLYAEKWCPFTKELAVMVVRSLEGEVFAYPTVETIHENNICHLVYAPARIPDTLAKKASILAKNAVKSFLGCGIFGVEMFLLENNELLINEIAPRPHNSGHYTIDACVTSQFEAHVRAVTGLPMPKGFTEFSTSITNAIMLNVLGDKATPNKELEICRRALETPHASVYLYGKTTRPERKMGHINVVTSSMQDAESRLSYILGDTTEIPKSLATDKESPLVGIIMGSDSDLPVMAVGARILKQFGVPFELTIVSAHRTPHRMSEYAIEAPKRGLKCIIAGAGGAAHLPGMVAAMTPLPVIGVPVKGSTLDGVDSLHSIVQMPRGIPVATVAINNSTNAALLAIRILGAYDSKWLTEMNQYMLNMETEVLGKAETLEEIGYEDYLTDKLKK.

Residues Lys-110–Thr-298 enclose the ATP-grasp domain. Residue Gly-138–Ala-193 participates in ATP binding.

The protein in the C-terminal section; belongs to the AIR carboxylase family. Class I subfamily.

The enzyme catalyses 5-amino-1-(5-phospho-D-ribosyl)imidazole-4-carboxylate + H(+) = 5-amino-1-(5-phospho-beta-D-ribosyl)imidazole + CO2. The protein operates within purine metabolism; IMP biosynthesis via de novo pathway; 5-amino-1-(5-phospho-D-ribosyl)imidazole-4-carboxylate from 5-amino-1-(5-phospho-D-ribosyl)imidazole (carboxylase route): step 1/1. The polypeptide is Phosphoribosylaminoimidazole carboxylase (ADE2) (Candida albicans (strain SC5314 / ATCC MYA-2876) (Yeast)).